Reading from the N-terminus, the 428-residue chain is Gamma-glutamyl phosphate reductase (428 aa).

The protein belongs to the gamma-glutamyl phosphate reductase family.

The protein resides in the cytoplasm. The enzyme catalyses L-glutamate 5-semialdehyde + phosphate + NADP(+) = L-glutamyl 5-phosphate + NADPH + H(+). It participates in amino-acid biosynthesis; L-proline biosynthesis; L-glutamate 5-semialdehyde from L-glutamate: step 2/2. In terms of biological role, catalyzes the NADPH-dependent reduction of L-glutamate 5-phosphate into L-glutamate 5-semialdehyde and phosphate. The product spontaneously undergoes cyclization to form 1-pyrroline-5-carboxylate. This is Gamma-glutamyl phosphate reductase from Mesorhizobium japonicum (strain LMG 29417 / CECT 9101 / MAFF 303099) (Mesorhizobium loti (strain MAFF 303099)).